Consider the following 382-residue polypeptide: D-galactonate dehydratase (382 aa).

Asp-183 serves as a coordination point for Mg(2+). The Proton donor role is filled by His-185. Residues Glu-209 and Glu-235 each contribute to the Mg(2+) site. The active-site Proton acceptor is His-285.

It belongs to the mandelate racemase/muconate lactonizing enzyme family. GalD subfamily. It depends on Mg(2+) as a cofactor.

It catalyses the reaction D-galactonate = 2-dehydro-3-deoxy-D-galactonate + H2O. It participates in carbohydrate acid metabolism; D-galactonate degradation; D-glyceraldehyde 3-phosphate and pyruvate from D-galactonate: step 1/3. Functionally, catalyzes the dehydration of D-galactonate to 2-keto-3-deoxy-D-galactonate. The protein is D-galactonate dehydratase of Salmonella dublin (strain CT_02021853).